Here is a 401-residue protein sequence, read N- to C-terminus: Glycerol-1-phosphate dehydrogenase [NAD(P)+] (401 aa).

Residues Asp-57, 118-122, and 140-143 each bind NAD(+); these read GTIHD and TAPS. Asp-145 is a binding site for substrate. Position 149 (Ser-149) interacts with NAD(+). Asp-192 contacts substrate. Ni(2+) contacts are provided by Asp-192 and His-272. Position 276 (His-276) interacts with substrate. Residue His-292 coordinates Ni(2+).

It belongs to the glycerol-1-phosphate dehydrogenase family. Homodimer. It depends on Ni(2+) as a cofactor.

The protein resides in the cytoplasm. The enzyme catalyses sn-glycerol 1-phosphate + NAD(+) = dihydroxyacetone phosphate + NADH + H(+). The catalysed reaction is sn-glycerol 1-phosphate + NADP(+) = dihydroxyacetone phosphate + NADPH + H(+). In terms of biological role, catalyzes the NAD(P)H-dependent reduction of dihydroxyacetonephosphate (DHAP or glycerone phosphate) to glycerol 1-phosphate (G1P). The G1P thus generated is probably used for the synthesis of phosphoglycerolipids in Gram-positive bacterial species. The protein is Glycerol-1-phosphate dehydrogenase [NAD(P)+] of Bacillus licheniformis (strain ATCC 14580 / DSM 13 / JCM 2505 / CCUG 7422 / NBRC 12200 / NCIMB 9375 / NCTC 10341 / NRRL NRS-1264 / Gibson 46).